A 208-amino-acid chain; its full sequence is ATP synthase subunit b (208 aa).

Positions 1–27 (MVKAKKLVFKWSLLVFSFFTLSLFLVS) are cleaved as a signal peptide. Cysteine 28 is lipidated: N-palmitoyl cysteine. A lipid anchor (S-diacylglycerol cysteine) is attached at cysteine 28. Residues 49 to 69 (WVFITHLLAFFILLTLMIFLF) traverse the membrane as a helical segment.

The protein belongs to the ATPase B chain family. As to quaternary structure, F-type ATPases have 2 components, F(1) - the catalytic core - and F(0) - the membrane proton channel. F(1) has five subunits: alpha(3), beta(3), gamma(1), delta(1), epsilon(1). F(0) has three main subunits: a(1), b(2) and c(10-14). The alpha and beta chains form an alternating ring which encloses part of the gamma chain. F(1) is attached to F(0) by a central stalk formed by the gamma and epsilon chains, while a peripheral stalk is formed by the delta and b chains.

The protein resides in the cell membrane. In terms of biological role, f(1)F(0) ATP synthase produces ATP from ADP in the presence of a proton or sodium gradient. F-type ATPases consist of two structural domains, F(1) containing the extramembraneous catalytic core and F(0) containing the membrane proton channel, linked together by a central stalk and a peripheral stalk. During catalysis, ATP synthesis in the catalytic domain of F(1) is coupled via a rotary mechanism of the central stalk subunits to proton translocation. Its function is as follows. Component of the F(0) channel, it forms part of the peripheral stalk, linking F(1) to F(0). The polypeptide is ATP synthase subunit b (Mycoplasma genitalium (strain ATCC 33530 / DSM 19775 / NCTC 10195 / G37) (Mycoplasmoides genitalium)).